The following is a 294-amino-acid chain: Mimecan (294 aa).

The signal sequence occupies residues 1 to 19; that stretch reads MKTLQAAFFLVAFVPLVKP. N-linked (GlcNAc...) asparagine glycosylation is present at Asn61. 7 LRR repeats span residues 108–127, 128–151, 152–175, 176–195, 196–221, 222–242, and 243–273; these read EAVP…FNKI, KRIA…GNMI, EEIE…ENRL, VKLP…QNRI, KSRG…HNAL, ESVP…HNNI, and TTIN…GNPI. Asn241 and Asn254 each carry an N-linked (GlcNAc...) asparagine glycan. Cys251 and Cys284 are disulfide-bonded.

It belongs to the small leucine-rich proteoglycan (SLRP) family. SLRP class III subfamily. Post-translationally, the composition of the N-linked chains or the substitution of the N-linked sites is different between embryonic and adult tissues. Contains keratan sulfate.

It localises to the secreted. The protein localises to the extracellular space. It is found in the extracellular matrix. Induces bone formation in conjunction with TGF-beta-1 or TGF-beta-2. The chain is Mimecan (OGN) from Gallus gallus (Chicken).